Here is a 345-residue protein sequence, read N- to C-terminus: Protein RecA (345 aa).

66–73 (GPESSGKT) contacts ATP.

Belongs to the RecA family.

Its subcellular location is the cytoplasm. Can catalyze the hydrolysis of ATP in the presence of single-stranded DNA, the ATP-dependent uptake of single-stranded DNA by duplex DNA, and the ATP-dependent hybridization of homologous single-stranded DNAs. It interacts with LexA causing its activation and leading to its autocatalytic cleavage. The protein is Protein RecA of Helicobacter hepaticus (strain ATCC 51449 / 3B1).